Consider the following 245-residue polypeptide: 1-(5-phosphoribosyl)-5-[(5-phosphoribosylamino)methylideneamino] imidazole-4-carboxamide isomerase (245 aa).

The Proton acceptor role is filled by Asp-7. The active-site Proton donor is Asp-129.

Belongs to the HisA/HisF family.

The protein localises to the cytoplasm. The enzyme catalyses 1-(5-phospho-beta-D-ribosyl)-5-[(5-phospho-beta-D-ribosylamino)methylideneamino]imidazole-4-carboxamide = 5-[(5-phospho-1-deoxy-D-ribulos-1-ylimino)methylamino]-1-(5-phospho-beta-D-ribosyl)imidazole-4-carboxamide. It participates in amino-acid biosynthesis; L-histidine biosynthesis; L-histidine from 5-phospho-alpha-D-ribose 1-diphosphate: step 4/9. In Edwardsiella ictaluri (strain 93-146), this protein is 1-(5-phosphoribosyl)-5-[(5-phosphoribosylamino)methylideneamino] imidazole-4-carboxamide isomerase.